We begin with the raw amino-acid sequence, 125 residues long: Ribonuclease pancreatic (125 aa).

Substrate-binding residues include K7 and R10. The Proton acceptor role is filled by H12. Disulfide bonds link C27–C85, C41–C96, C59–C111, and C66–C73. N35 is a glycosylation site (N-linked (GlcNAc...) asparagine). Substrate contacts are provided by residues 42–46 (KPVNT), K67, and R86. The Proton donor role is filled by H120.

This sequence belongs to the pancreatic ribonuclease family. Monomer. Interacts with and forms tight 1:1 complexes with RNH1. Dimerization of two such complexes may occur. Interaction with RNH1 inhibits this protein. In terms of tissue distribution, pancreas.

It localises to the secreted. The enzyme catalyses an [RNA] containing cytidine + H2O = an [RNA]-3'-cytidine-3'-phosphate + a 5'-hydroxy-ribonucleotide-3'-[RNA].. It carries out the reaction an [RNA] containing uridine + H2O = an [RNA]-3'-uridine-3'-phosphate + a 5'-hydroxy-ribonucleotide-3'-[RNA].. Endonuclease that catalyzes the cleavage of RNA on the 3' side of pyrimidine nucleotides. Acts on single-stranded and double-stranded RNA. This chain is Ribonuclease pancreatic (RNASE1), found in Spalax ehrenbergi (Middle East blind mole rat).